The primary structure comprises 125 residues: Homeobox protein HD-8 (125 aa).

The homeobox DNA-binding region spans 30 to 89; that stretch reads EPDTRTRKTTFQMMVLKEVFKIAPHPSTLTKADLALMIKLPLKAVQIWFQNERSRKERGG.

It localises to the nucleus. This is Homeobox protein HD-8 (HD-8) from Encephalitozoon cuniculi (strain GB-M1) (Microsporidian parasite).